A 324-amino-acid chain; its full sequence is Fibronectin type III domain-containing protein 8 (324 aa).

In terms of domain architecture, Fibronectin type-III spans 179–280 (PDTPFIFEHT…KPYKFATLAT (102 aa)).

The sequence is that of Fibronectin type III domain-containing protein 8 (FNDC8) from Macaca fascicularis (Crab-eating macaque).